The following is a 434-amino-acid chain: Chaperone SurA (434 aa).

The N-terminal stretch at 1–22 (MKPSKHLIFALFALAISQPTMA) is a signal peptide. PpiC domains follow at residues 173 to 274 (DVEY…KIMD) and 283 to 383 (IEEV…QLEE).

It is found in the periplasm. The catalysed reaction is [protein]-peptidylproline (omega=180) = [protein]-peptidylproline (omega=0). In terms of biological role, chaperone involved in the correct folding and assembly of outer membrane proteins. Recognizes specific patterns of aromatic residues and the orientation of their side chains, which are found more frequently in integral outer membrane proteins. May act in both early periplasmic and late outer membrane-associated steps of protein maturation. This Shewanella oneidensis (strain ATCC 700550 / JCM 31522 / CIP 106686 / LMG 19005 / NCIMB 14063 / MR-1) protein is Chaperone SurA.